Reading from the N-terminus, the 142-residue chain is Hemoglobin subunit alpha (142 aa).

The region spanning 2–142 (HLTADDKKHI…VSNVLTSKYR (141 aa)) is the Globin domain. The heme b site is built by His-59 and His-88.

It belongs to the globin family. In terms of assembly, heterotetramer of two alpha chains and two beta chains. As to expression, red blood cells.

Its function is as follows. Involved in oxygen transport from the lung to the various peripheral tissues. The polypeptide is Hemoglobin subunit alpha (hba-A) (Xenopus tropicalis (Western clawed frog)).